The primary structure comprises 764 residues: Metabotropic glutamate receptor-like protein H (764 aa).

The signal sequence occupies residues 1–20 (MKNILKILILILICINKINC). Topologically, residues 21–393 (LDGDGKQFRM…EVEFSQSIQN (373 aa)) are extracellular. N-linked (GlcNAc...) asparagine glycans are attached at residues Asn-72, Asn-260, Asn-278, Asn-344, and Asn-379. A helical transmembrane segment spans residues 394–414 (GFSITTGILIGITILMMIGII). Residues 415–427 (KYSKTPSMRSASP) are Cytoplasmic-facing. A helical transmembrane segment spans residues 428-448 (IFLNFILAGGIIVYIGIIVWV). The Extracellular segment spans residues 449-464 (GPMSTHSCNARLWLVT). A helical membrane pass occupies residues 465 to 485 (LGFSTLIGSLVVKNFRIWLIF). Residues 486-500 (DNPELKSIKITNYQL) are Cytoplasmic-facing. A helical transmembrane segment spans residues 501–521 (FPWVGACLVINIILMAILTSV). Topologically, residues 522 to 552 (GDLKQIDAMNIDSLGKYEYMKVCKMNSSGAS) are extracellular. N-linked (GlcNAc...) asparagine glycosylation is present at Asn-547. A helical membrane pass occupies residues 553–573 (TLYTILAYFAALLLVGVFVSW). Over 574–587 (KIRIVDILEFNESG) the chain is Cytoplasmic. The helical transmembrane segment at 588–608 (AIANTLYAISFCLFVIVPLMI) threads the bilayer. The Extracellular segment spans residues 609–617 (SPQDMQSET). A helical transmembrane segment spans residues 618–638 (IILCTTGLFITTAALLIIFIP). The Cytoplasmic segment spans residues 639–764 (KFWRVFRKGA…IIVNDSENNN (126 aa)). Positions 664–764 (ATARAESGSK…IIVNDSENNN (101 aa)) are disordered. A compositionally biased stretch (low complexity) spans 671–690 (GSKGSNGNASSGNRTNRRGN). Positions 707 to 719 (ENQKEKEKIKDDV) are enriched in basic and acidic residues. Acidic residues predominate over residues 731-748 (FTDEASDTDNNEFNDIEL).

It in the N-terminal section; belongs to the BMP lipoprotein family. In the C-terminal section; belongs to the G-protein coupled receptor 3 family. GABA-B receptor subfamily.

The protein resides in the membrane. In Dictyostelium discoideum (Social amoeba), this protein is Metabotropic glutamate receptor-like protein H (grlH).